Consider the following 441-residue polypeptide: Histidine--tRNA ligase (441 aa).

It belongs to the class-II aminoacyl-tRNA synthetase family. As to quaternary structure, homodimer.

Its subcellular location is the cytoplasm. The enzyme catalyses tRNA(His) + L-histidine + ATP = L-histidyl-tRNA(His) + AMP + diphosphate + H(+). The sequence is that of Histidine--tRNA ligase from Synechococcus sp. (strain WH7803).